Here is a 631-residue protein sequence, read N- to C-terminus: Phosphomethylpyrimidine synthase (631 aa).

Substrate is bound by residues N239, M268, Y297, H333, S353–G355, D394–R397, and E433. H437 contacts Zn(2+). A substrate-binding site is contributed by Y460. Residue H501 coordinates Zn(2+). Positions 581, 584, and 589 each coordinate [4Fe-4S] cluster.

This sequence belongs to the ThiC family. As to quaternary structure, homodimer. It depends on [4Fe-4S] cluster as a cofactor.

It carries out the reaction 5-amino-1-(5-phospho-beta-D-ribosyl)imidazole + S-adenosyl-L-methionine = 4-amino-2-methyl-5-(phosphooxymethyl)pyrimidine + CO + 5'-deoxyadenosine + formate + L-methionine + 3 H(+). It functions in the pathway cofactor biosynthesis; thiamine diphosphate biosynthesis. Catalyzes the synthesis of the hydroxymethylpyrimidine phosphate (HMP-P) moiety of thiamine from aminoimidazole ribotide (AIR) in a radical S-adenosyl-L-methionine (SAM)-dependent reaction. This Ralstonia nicotianae (strain ATCC BAA-1114 / GMI1000) (Ralstonia solanacearum) protein is Phosphomethylpyrimidine synthase.